The following is an 882-amino-acid chain: Probable LRR receptor-like serine/threonine-protein kinase At1g12460 (882 aa).

Positions 1-21 (MRKVHLFLVLVHFIYISTSRS) are cleaved as a signal peptide. Residues 22-515 (DSISERDILL…SRNSDALSIS (494 aa)) are Extracellular-facing. A glycan (N-linked (GlcNAc...) asparagine) is linked at N76. LRR repeat units follow at residues 92 to 113 (FIRVLNLFGNRFTGNLPLDYFK), 116 to 138 (TLWTINVSSNALSGPIPEFISEL), 140 to 162 (SLRFLDLSKNGFTGEIPVSLFKF), 165 to 187 (KTKFVSLAHNNIFGSIPASIVNC), 189 to 210 (NLVGFDFSYNNLKGVLPPRICD), 213 to 235 (VLEYISVRNNLLSGDVSEEIQKC), 237 to 258 (RLILVDLGSNLFHGLAPFAVLT), 261 to 283 (NITYFNVSWNRFGGEIGEIVDCS), 285 to 308 (SLEFLDASSNELTGRIPTGVMGCK), 309 to 331 (SLKLLDLESNKLNGSIPGSIGKM), 333 to 355 (SLSVIRLGNNSIDGVIPRDIGSL), 357 to 379 (FLQVLNLHNLNLIGEVPEDISNC), 381 to 404 (VLLELDVSGNDLEGKISKKLLNLT), 405 to 427 (NIKILDLHRNRLNGSIPPELGNL), 429 to 451 (KVQFLDLSQNSLSGPIPSSLGSL), and 453 to 475 (TLTHFNVSYNNLSGVIPPVPMIQ). An N-linked (GlcNAc...) asparagine glycan is attached at N121. N-linked (GlcNAc...) asparagine glycosylation is found at N261 and N266. N-linked (GlcNAc...) asparagine glycans are attached at residues N321 and N341. Residues N402, N417, and N426 are each glycosylated (N-linked (GlcNAc...) asparagine). N-linked (GlcNAc...) asparagine glycans are attached at residues N458 and N463. Residues 516–536 (VIIVIIAAAVILFGVCIVLAL) form a helical membrane-spanning segment. At 537-882 (NLRARKRRKD…LESIRNGFGS (346 aa)) the chain is on the cytoplasmic side. Phosphothreonine is present on T589. Residues 593-876 (LDKENIIGMG…AEVVQVLESI (284 aa)) form the Protein kinase domain. ATP contacts are provided by residues 599–607 (IGMGSIGSV) and K621. Y770 carries the post-translational modification Phosphotyrosine.

The protein belongs to the protein kinase superfamily. Ser/Thr protein kinase family.

Its subcellular location is the cell membrane. The enzyme catalyses L-seryl-[protein] + ATP = O-phospho-L-seryl-[protein] + ADP + H(+). It carries out the reaction L-threonyl-[protein] + ATP = O-phospho-L-threonyl-[protein] + ADP + H(+). The protein is Probable LRR receptor-like serine/threonine-protein kinase At1g12460 of Arabidopsis thaliana (Mouse-ear cress).